Reading from the N-terminus, the 369-residue chain is 4-hydroxy-3-methylbut-2-en-1-yl diphosphate synthase (flavodoxin) (369 aa).

Residues Cys-270, Cys-273, Cys-305, and Glu-312 each contribute to the [4Fe-4S] cluster site.

This sequence belongs to the IspG family. The cofactor is [4Fe-4S] cluster.

The enzyme catalyses (2E)-4-hydroxy-3-methylbut-2-enyl diphosphate + oxidized [flavodoxin] + H2O + 2 H(+) = 2-C-methyl-D-erythritol 2,4-cyclic diphosphate + reduced [flavodoxin]. It participates in isoprenoid biosynthesis; isopentenyl diphosphate biosynthesis via DXP pathway; isopentenyl diphosphate from 1-deoxy-D-xylulose 5-phosphate: step 5/6. Functionally, converts 2C-methyl-D-erythritol 2,4-cyclodiphosphate (ME-2,4cPP) into 1-hydroxy-2-methyl-2-(E)-butenyl 4-diphosphate. The chain is 4-hydroxy-3-methylbut-2-en-1-yl diphosphate synthase (flavodoxin) from Pseudomonas entomophila (strain L48).